We begin with the raw amino-acid sequence, 352 residues long: ATPase GET3 (352 aa).

26 to 33 contributes to the ATP binding site; the sequence is KGGVGKTT. Residue aspartate 57 is part of the active site. 2 residues coordinate ATP: glutamate 243 and asparagine 270. Positions 283 and 286 each coordinate Zn(2+).

Belongs to the arsA ATPase family. As to quaternary structure, homodimer. Component of the Golgi to ER traffic (GET) complex, which is composed of GET1, GET2 and GET3. Within the complex, GET1 and GET2 form a heterotetramer which is stabilized by phosphatidylinositol binding and which binds to the GET3 homodimer. Interacts with the chloride channel protein GEF1.

It localises to the cytoplasm. The protein resides in the endoplasmic reticulum. Its subcellular location is the golgi apparatus. Functionally, ATPase required for the post-translational delivery of tail-anchored (TA) proteins to the endoplasmic reticulum. Recognizes and selectively binds the transmembrane domain of TA proteins in the cytosol. This complex then targets to the endoplasmic reticulum by membrane-bound receptors GET1 and GET2, where the tail-anchored protein is released for insertion. This process is regulated by ATP binding and hydrolysis. ATP binding drives the homodimer towards the closed dimer state, facilitating recognition of newly synthesized TA membrane proteins. ATP hydrolysis is required for insertion. Subsequently, the homodimer reverts towards the open dimer state, lowering its affinity for the GET1-GET2 receptor, and returning it to the cytosol to initiate a new round of targeting. Cooperates with the HDEL receptor ERD2 to mediate the ATP-dependent retrieval of resident ER proteins that contain a C-terminal H-D-E-L retention signal from the Golgi to the ER. Involved in low-level resistance to the oxyanions arsenite and arsenate, and in heat tolerance. The chain is ATPase GET3 from Vanderwaltozyma polyspora (strain ATCC 22028 / DSM 70294 / BCRC 21397 / CBS 2163 / NBRC 10782 / NRRL Y-8283 / UCD 57-17) (Kluyveromyces polysporus).